The chain runs to 216 residues: Deoxyribose-phosphate aldolase (216 aa).

D89 functions as the Proton donor/acceptor in the catalytic mechanism. K152 serves as the catalytic Schiff-base intermediate with acetaldehyde. The active-site Proton donor/acceptor is K181.

Belongs to the DeoC/FbaB aldolase family. DeoC type 1 subfamily.

Its subcellular location is the cytoplasm. The catalysed reaction is 2-deoxy-D-ribose 5-phosphate = D-glyceraldehyde 3-phosphate + acetaldehyde. The protein operates within carbohydrate degradation; 2-deoxy-D-ribose 1-phosphate degradation; D-glyceraldehyde 3-phosphate and acetaldehyde from 2-deoxy-alpha-D-ribose 1-phosphate: step 2/2. In terms of biological role, catalyzes a reversible aldol reaction between acetaldehyde and D-glyceraldehyde 3-phosphate to generate 2-deoxy-D-ribose 5-phosphate. The polypeptide is Deoxyribose-phosphate aldolase (Clostridium tetani (strain Massachusetts / E88)).